Consider the following 1040-residue polypeptide: Multidrug resistance protein MdtB (1040 aa).

Transmembrane regions (helical) follow at residues 16-36, 347-367, 369-389, 396-416, 440-460, 472-492, 537-557, 863-883, 888-908, 911-931, 968-988, and 998-1018; these read FIMR…AGII, LMMA…NIPA, IIPG…MVFL, LTLM…IVVI, IGFT…PLLF, FAIT…TLTP, WLTL…WVFI, LGST…VLGI, FIHP…ALLA, IAGS…IGIV, ILMT…STGV, and IGMV…TPVI.

It belongs to the resistance-nodulation-cell division (RND) (TC 2.A.6) family. MdtB subfamily. Part of a tripartite efflux system composed of MdtA, MdtB and MdtC. MdtB forms a heteromultimer with MdtC.

Its subcellular location is the cell inner membrane. This is Multidrug resistance protein MdtB from Shigella boydii serotype 18 (strain CDC 3083-94 / BS512).